The primary structure comprises 144 residues: 3-hydroxyacyl-[acyl-carrier-protein] dehydratase FabZ (144 aa).

Residue His48 is part of the active site.

It belongs to the thioester dehydratase family. FabZ subfamily.

It localises to the cytoplasm. The enzyme catalyses a (3R)-hydroxyacyl-[ACP] = a (2E)-enoyl-[ACP] + H2O. Its function is as follows. Involved in unsaturated fatty acids biosynthesis. Catalyzes the dehydration of short chain beta-hydroxyacyl-ACPs and long chain saturated and unsaturated beta-hydroxyacyl-ACPs. The sequence is that of 3-hydroxyacyl-[acyl-carrier-protein] dehydratase FabZ from Bacillus licheniformis (strain ATCC 14580 / DSM 13 / JCM 2505 / CCUG 7422 / NBRC 12200 / NCIMB 9375 / NCTC 10341 / NRRL NRS-1264 / Gibson 46).